Here is a 168-residue protein sequence, read N- to C-terminus: Photosystem I assembly protein Ycf3 (168 aa).

3 TPR repeats span residues 35 to 68, 72 to 105, and 120 to 153; these read AFTY…EIDP, SYIL…NPFL, and GEQA…TPGN.

It belongs to the Ycf3 family.

It is found in the plastid. Its subcellular location is the chloroplast thylakoid membrane. Essential for the assembly of the photosystem I (PSI) complex. May act as a chaperone-like factor to guide the assembly of the PSI subunits. This Acorus calamus var. americanus (American sweet flag) protein is Photosystem I assembly protein Ycf3.